The sequence spans 422 residues: ATP-dependent RNA helicase RhlB (422 aa).

The Q motif motif lies at 9-37 (QKFSDFALHPLVIKAIENQGFYHCTPIQA). Positions 40–219 (FPITLAGRDV…FEQMNHPEYI (180 aa)) constitute a Helicase ATP-binding domain. 53–60 (AQTGTGKT) serves as a coordination point for ATP. The DEAD box signature appears at 165–168 (DEAD). The Helicase C-terminal domain occupies 245-390 (RLLQTLIEEE…TSEYNKEALL (146 aa)). Residues 394–422 (PQPKRLQRHHRHYAGSRNQGASRKPRSPQ) form a disordered region. Positions 398–407 (RLQRHHRHYA) are enriched in basic residues.

The protein belongs to the DEAD box helicase family. RhlB subfamily. As to quaternary structure, component of the RNA degradosome, which is a multiprotein complex involved in RNA processing and mRNA degradation.

It localises to the cytoplasm. It carries out the reaction ATP + H2O = ADP + phosphate + H(+). Functionally, DEAD-box RNA helicase involved in RNA degradation. Has RNA-dependent ATPase activity and unwinds double-stranded RNA. The protein is ATP-dependent RNA helicase RhlB of Hamiltonella defensa subsp. Acyrthosiphon pisum (strain 5AT).